A 262-amino-acid polypeptide reads, in one-letter code: Thiazole synthase (262 aa).

Catalysis depends on Lys98, which acts as the Schiff-base intermediate with DXP. 1-deoxy-D-xylulose 5-phosphate is bound by residues Gly159, 186–187 (AG), and 208–209 (NT).

Belongs to the ThiG family. As to quaternary structure, homotetramer. Forms heterodimers with either ThiH or ThiS.

It localises to the cytoplasm. It catalyses the reaction [ThiS sulfur-carrier protein]-C-terminal-Gly-aminoethanethioate + 2-iminoacetate + 1-deoxy-D-xylulose 5-phosphate = [ThiS sulfur-carrier protein]-C-terminal Gly-Gly + 2-[(2R,5Z)-2-carboxy-4-methylthiazol-5(2H)-ylidene]ethyl phosphate + 2 H2O + H(+). It participates in cofactor biosynthesis; thiamine diphosphate biosynthesis. Functionally, catalyzes the rearrangement of 1-deoxy-D-xylulose 5-phosphate (DXP) to produce the thiazole phosphate moiety of thiamine. Sulfur is provided by the thiocarboxylate moiety of the carrier protein ThiS. In vitro, sulfur can be provided by H(2)S. This Hahella chejuensis (strain KCTC 2396) protein is Thiazole synthase.